The following is a 160-amino-acid chain: D-aminoacyl-tRNA deacylase (160 aa).

Positions 137–138 (GP) match the Gly-cisPro motif, important for rejection of L-amino acids motif.

This sequence belongs to the DTD family. In terms of assembly, homodimer.

It localises to the cytoplasm. The catalysed reaction is glycyl-tRNA(Ala) + H2O = tRNA(Ala) + glycine + H(+). The enzyme catalyses a D-aminoacyl-tRNA + H2O = a tRNA + a D-alpha-amino acid + H(+). Its function is as follows. An aminoacyl-tRNA editing enzyme that deacylates mischarged D-aminoacyl-tRNAs. Also deacylates mischarged glycyl-tRNA(Ala), protecting cells against glycine mischarging by AlaRS. Acts via tRNA-based rather than protein-based catalysis; rejects L-amino acids rather than detecting D-amino acids in the active site. By recycling D-aminoacyl-tRNA to D-amino acids and free tRNA molecules, this enzyme counteracts the toxicity associated with the formation of D-aminoacyl-tRNA entities in vivo and helps enforce protein L-homochirality. In Chloroflexus aurantiacus (strain ATCC 29364 / DSM 637 / Y-400-fl), this protein is D-aminoacyl-tRNA deacylase.